The primary structure comprises 347 residues: Protein pelota homolog (347 aa).

This sequence belongs to the eukaryotic release factor 1 family. Pelota subfamily. As to quaternary structure, monomer. A divalent metal cation is required as a cofactor.

It localises to the cytoplasm. In terms of biological role, may function in recognizing stalled ribosomes, interact with stem-loop structures in stalled mRNA molecules, and effect endonucleolytic cleavage of the mRNA. May play a role in the release non-functional ribosomes and degradation of damaged mRNAs. Has endoribonuclease activity. The polypeptide is Protein pelota homolog (Methanococcoides burtonii (strain DSM 6242 / NBRC 107633 / OCM 468 / ACE-M)).